Here is a 220-residue protein sequence, read N- to C-terminus: Deoxyribose-phosphate aldolase 1 (220 aa).

The active-site Proton donor/acceptor is Asp89. Lys151 serves as the catalytic Schiff-base intermediate with acetaldehyde. The active-site Proton donor/acceptor is the Lys180.

This sequence belongs to the DeoC/FbaB aldolase family. DeoC type 1 subfamily.

It is found in the cytoplasm. It carries out the reaction 2-deoxy-D-ribose 5-phosphate = D-glyceraldehyde 3-phosphate + acetaldehyde. It participates in carbohydrate degradation; 2-deoxy-D-ribose 1-phosphate degradation; D-glyceraldehyde 3-phosphate and acetaldehyde from 2-deoxy-alpha-D-ribose 1-phosphate: step 2/2. Functionally, catalyzes a reversible aldol reaction between acetaldehyde and D-glyceraldehyde 3-phosphate to generate 2-deoxy-D-ribose 5-phosphate. The protein is Deoxyribose-phosphate aldolase 1 of Staphylococcus aureus (strain bovine RF122 / ET3-1).